The following is a 147-amino-acid chain: Large ribosomal subunit protein uL15 (147 aa).

Residues 1 to 28 are compositionally biased toward basic residues; the sequence is MIRRRKKVRKLRGSHTHGWGCKKKHRGG. The interval 1-43 is disordered; sequence MIRRRKKVRKLRGSHTHGWGCKKKHRGGGSKGGRGMAGTGKRN. Gly residues predominate over residues 29–38; that stretch reads GSKGGRGMAG.

This sequence belongs to the universal ribosomal protein uL15 family. As to quaternary structure, part of the 50S ribosomal subunit.

Its function is as follows. Binds to the 23S rRNA. The sequence is that of Large ribosomal subunit protein uL15 from Pyrococcus horikoshii (strain ATCC 700860 / DSM 12428 / JCM 9974 / NBRC 100139 / OT-3).